An 84-amino-acid chain; its full sequence is MAFGKKPAQNPLFKRKRYCRFTVAGVEQIDYKDVDTLKGFIGENAKITPARLTGTKAKYQRQLDTAIKRARYLALLPFSDQHKK.

This sequence belongs to the bacterial ribosomal protein bS18 family. In terms of assembly, part of the 30S ribosomal subunit. Forms a tight heterodimer with protein bS6.

In terms of biological role, binds as a heterodimer with protein bS6 to the central domain of the 16S rRNA, where it helps stabilize the platform of the 30S subunit. This Polynucleobacter necessarius subsp. necessarius (strain STIR1) protein is Small ribosomal subunit protein bS18.